A 232-amino-acid chain; its full sequence is Ribonuclease 3 (232 aa).

The region spanning 6–133 (FNDIENRLGV…VIAAVYLDKG (128 aa)) is the RNase III domain. Glutamate 46 contacts Mg(2+). Residue aspartate 50 is part of the active site. Mg(2+) contacts are provided by aspartate 119 and glutamate 122. Glutamate 122 is an active-site residue. The region spanning 160 to 229 (DFKTKLQELL…AKEALKRLEK (70 aa)) is the DRBM domain.

The protein belongs to the ribonuclease III family. As to quaternary structure, homodimer. It depends on Mg(2+) as a cofactor.

It localises to the cytoplasm. The enzyme catalyses Endonucleolytic cleavage to 5'-phosphomonoester.. In terms of biological role, digests double-stranded RNA. Involved in the processing of primary rRNA transcript to yield the immediate precursors to the large and small rRNAs (23S and 16S). Processes some mRNAs, and tRNAs when they are encoded in the rRNA operon. Processes pre-crRNA and tracrRNA of type II CRISPR loci if present in the organism. In Clostridium botulinum (strain Eklund 17B / Type B), this protein is Ribonuclease 3.